Consider the following 418-residue polypeptide: Delta(14)-sterol reductase TM7SF2 (418 aa).

A run of 6 helical transmembrane segments spans residues 13–35 (FGGP…HLLL), 62–81 (ALLL…LLPA), 102–124 (GFQA…LPLS), 129–148 (MLLP…SLLL), 255–277 (FGFM…QAQF), and 287–304 (WPLA…YYIF). Residues Lys311, Arg315, Leu338, Trp343, and 350–351 (NY) contribute to the NADP(+) site. The helical transmembrane segment at 355–377 (LIMALAWSLPCGVFHLLPYFYFL) threads the bilayer. Residues Asp390, 394-398 (CRQKY), and Tyr405 each bind NADP(+).

This sequence belongs to the ERG4/ERG24 family. Highly expressed in liver and brain.

It is found in the microsome membrane. It localises to the endoplasmic reticulum membrane. It carries out the reaction 4,4-dimethyl-5alpha-cholesta-8,24-dien-3beta-ol + NADP(+) = 4,4-dimethyl-5alpha-cholesta-8,14,24-trien-3beta-ol + NADPH + H(+). It catalyses the reaction 5alpha-cholest-8,14-dien-3beta-ol + NADPH + H(+) = 5alpha-cholest-8-en-3beta-ol + NADP(+). The enzyme catalyses 4,4-dimethyl-8,14-cholestadien-3beta-ol + NADPH + H(+) = 4,4-dimethyl-5alpha-cholest-8-en-3beta-ol + NADP(+). Its pathway is steroid biosynthesis; cholesterol biosynthesis. Catalyzes the reduction of the C14-unsaturated bond of lanosterol, as part of the metabolic pathway leading to cholesterol biosynthesis. The protein is Delta(14)-sterol reductase TM7SF2 (TM7SF2) of Bos taurus (Bovine).